Consider the following 436-residue polypeptide: GTPase Der (436 aa).

EngA-type G domains follow at residues P4–E167 and I175–N351. Residues G10–S17, D57–I61, N119–D122, G181–S188, D229–M233, and N294–D297 contribute to the GTP site. Residues K352–K436 enclose the KH-like domain.

Belongs to the TRAFAC class TrmE-Era-EngA-EngB-Septin-like GTPase superfamily. EngA (Der) GTPase family. In terms of assembly, associates with the 50S ribosomal subunit.

In terms of biological role, GTPase that plays an essential role in the late steps of ribosome biogenesis. The chain is GTPase Der from Streptococcus pyogenes serotype M5 (strain Manfredo).